A 2193-amino-acid chain; its full sequence is Protein sidekick-1 (2193 aa).

The segment covering 1 to 23 (MARARPSVAGGGVAAPPERAGPG) has biased composition (low complexity). A disordered region spans residues 1–56 (MARARPSVAGGGVAAPPERAGPGRPRRSRTGHHCDPECPGLRAAPRTPGPGAGRRA). 5 consecutive Ig-like C2-type domains span residues 86-168 (PYFK…SEIQ), 173-259 (GNFM…SPFI), 275-363 (PIIV…AFLS), 368-458 (PYFT…LDVT), and 462-551 (PAFT…AMLT). Cysteine 108 and cysteine 151 are joined by a disulfide. Residues asparagine 123, asparagine 253, and asparagine 283 are each glycosylated (N-linked (GlcNAc...) asparagine). 3 disulfides stabilise this stretch: cysteine 297–cysteine 344, cysteine 390–cysteine 440, and cysteine 483–cysteine 535. N-linked (GlcNAc...) asparagine glycans are attached at residues asparagine 532, asparagine 545, and asparagine 554. An Ig-like C2-type 6 domain is found at 556–645 (TSIVHPPEDR…GSDSRTARLE (90 aa)). The cysteines at positions 577 and 629 are disulfide-linked. Fibronectin type-III domains lie at 652–748 (PPQN…LPEE), 753–849 (PPKN…TLQG), 854–952 (PPQN…THED), 956–1050 (AVGH…VPPD), 1054–1153 (APSN…TLQA), 1158–1256 (APTS…TRES), 1261–1358 (APEN…TKDD), 1362–1456 (PPVR…TEKR), 1461–1558 (PPRE…TLQD), 1563–1681 (PPGS…VGEA), 1686–1782 (APQN…THQA), 1786–1881 (PPSF…AGPA), and 1884–1982 (SPGS…SAQA). 5 N-linked (GlcNAc...) asparagine glycosylation sites follow: asparagine 764, asparagine 803, asparagine 864, asparagine 997, and asparagine 1006. Residues asparagine 1264 and asparagine 1315 are each glycosylated (N-linked (GlcNAc...) asparagine). N-linked (GlcNAc...) asparagine glycans are attached at residues asparagine 1636, asparagine 1730, asparagine 1801, and asparagine 1875. The helical transmembrane segment at 1992–2012 (FLLVMALSSLLLILLVVFVLV) threads the bilayer. The Cytoplasmic portion of the chain corresponds to 2013 to 2193 (LHGQSKKYKS…APLTGFSSFV (181 aa)). Residues 2057–2080 (STFSKKNGTRSPPRPSPGGLHYSD) form a disordered region. The PDZ-binding signature appears at 2187 to 2193 (TGFSSFV).

Belongs to the sidekick family. Homodimer; mediates homophilic interactions to promote cell adhesion. Interacts (via PDZ-binding motif) with MAGI1, MAGI2, DLG2, DLG3 and DLG4. In terms of assembly, does not mediate homophilic interactions. Expressed by non-overlapping subsets of retinal neurons. Sdk1 and Sdk2 are expressed in non-overlapping subsets of interneurons and retinal ganglion cells (RGCs) that form synapses in distinct inner plexiform layer (IPL) sublaminae (at protein level).

It localises to the cell membrane. The protein resides in the synapse. In terms of biological role, adhesion molecule that promotes lamina-specific synaptic connections in the retina. Expressed in specific subsets of interneurons and retinal ganglion cells (RGCs) and promotes synaptic connectivity via homophilic interactions. The chain is Protein sidekick-1 from Mus musculus (Mouse).